Reading from the N-terminus, the 308-residue chain is Quinolinate synthase (308 aa).

Iminosuccinate contacts are provided by His24 and Ser41. Cys86 contributes to the [4Fe-4S] cluster binding site. Residues 112 to 114 (YIN) and Ser129 each bind iminosuccinate. Cys172 contacts [4Fe-4S] cluster. Residues 198–200 (HPE) and Thr215 contribute to the iminosuccinate site. Cys265 contributes to the [4Fe-4S] cluster binding site.

It belongs to the quinolinate synthase family. Type 2 subfamily. Requires [4Fe-4S] cluster as cofactor.

It is found in the cytoplasm. The catalysed reaction is iminosuccinate + dihydroxyacetone phosphate = quinolinate + phosphate + 2 H2O + H(+). The protein operates within cofactor biosynthesis; NAD(+) biosynthesis; quinolinate from iminoaspartate: step 1/1. Functionally, catalyzes the condensation of iminoaspartate with dihydroxyacetone phosphate to form quinolinate. The polypeptide is Quinolinate synthase (Sulfurihydrogenibium sp. (strain YO3AOP1)).